Here is a 224-residue protein sequence, read N- to C-terminus: Flagellar L-ring protein (224 aa).

The first 15 residues, 1–15, serve as a signal peptide directing secretion; that stretch reads MLRYLMVGSLLVLAG. C16 is lipidated: N-palmitoyl cysteine. A lipid anchor (S-diacylglycerol cysteine) is attached at C16.

The protein belongs to the FlgH family. As to quaternary structure, the basal body constitutes a major portion of the flagellar organelle and consists of four rings (L,P,S, and M) mounted on a central rod.

It localises to the cell outer membrane. It is found in the bacterial flagellum basal body. In terms of biological role, assembles around the rod to form the L-ring and probably protects the motor/basal body from shearing forces during rotation. The chain is Flagellar L-ring protein from Shewanella amazonensis (strain ATCC BAA-1098 / SB2B).